A 217-amino-acid chain; its full sequence is 4-hydroxy-tetrahydrodipicolinate reductase (217 aa).

Residues 7 to 12 (GFKGKM), 71 to 73 (GTT), and 95 to 98 (SYNF) each bind NAD(+). Residue His-127 is the Proton donor/acceptor of the active site. His-128 serves as a coordination point for (S)-2,3,4,5-tetrahydrodipicolinate. Lys-131 (proton donor) is an active-site residue. 137-138 (GT) provides a ligand contact to (S)-2,3,4,5-tetrahydrodipicolinate.

The protein belongs to the DapB family.

It localises to the cytoplasm. The enzyme catalyses (S)-2,3,4,5-tetrahydrodipicolinate + NAD(+) + H2O = (2S,4S)-4-hydroxy-2,3,4,5-tetrahydrodipicolinate + NADH + H(+). The catalysed reaction is (S)-2,3,4,5-tetrahydrodipicolinate + NADP(+) + H2O = (2S,4S)-4-hydroxy-2,3,4,5-tetrahydrodipicolinate + NADPH + H(+). It participates in amino-acid biosynthesis; L-lysine biosynthesis via DAP pathway; (S)-tetrahydrodipicolinate from L-aspartate: step 4/4. In terms of biological role, catalyzes the conversion of 4-hydroxy-tetrahydrodipicolinate (HTPA) to tetrahydrodipicolinate. The protein is 4-hydroxy-tetrahydrodipicolinate reductase of Thermosipho africanus (strain TCF52B).